The chain runs to 561 residues: Membrane protein insertase YidC (561 aa).

The next 6 helical transmembrane spans lie at 7-27 (ILIV…NQDY), 342-362 (LELT…FWLL), 368-388 (LLGN…GLFF), 438-458 (LGGC…YWVL), 469-489 (WMLW…PIIM), and 516-536 (PIIF…YWVV).

Belongs to the OXA1/ALB3/YidC family. Type 1 subfamily. In terms of assembly, interacts with the Sec translocase complex via SecD. Specifically interacts with transmembrane segments of nascent integral membrane proteins during membrane integration.

Its subcellular location is the cell inner membrane. In terms of biological role, required for the insertion and/or proper folding and/or complex formation of integral membrane proteins into the membrane. Involved in integration of membrane proteins that insert both dependently and independently of the Sec translocase complex, as well as at least some lipoproteins. Aids folding of multispanning membrane proteins. The protein is Membrane protein insertase YidC of Pseudomonas entomophila (strain L48).